Here is a 349-residue protein sequence, read N- to C-terminus: Interferon regulatory factor 2 (349 aa).

Residues 5–113 (RMRMRPWLEE…NAFRVYRMLP (109 aa)) constitute a DNA-binding region (IRF tryptophan pentad repeat). N6-acetyllysine is present on residues Lys75 and Lys78. Lys137 participates in a covalent cross-link: Glycyl lysine isopeptide (Lys-Gly) (interchain with G-Cter in SUMO); alternate. Residue Lys137 forms a Glycyl lysine isopeptide (Lys-Gly) (interchain with G-Cter in SUMO2); alternate linkage. A Glycyl lysine isopeptide (Lys-Gly) (interchain with G-Cter in SUMO) cross-link involves residue Lys166. Residue Ser225 is modified to Phosphoserine. A compositionally biased stretch (polar residues) spans 230 to 239 (YAESETTDSV). The disordered stretch occupies residues 230–253 (YAESETTDSVASDEENAEGRPHWR). Residue Lys260 forms a Glycyl lysine isopeptide (Lys-Gly) (interchain with G-Cter in SUMO2) linkage. A Glycyl lysine isopeptide (Lys-Gly) (interchain with G-Cter in SUMO) cross-link involves residue Lys293. The disordered stretch occupies residues 303–349 (SSWPPFTDLPLPAPVTPTPSSSRPDRETRASVIKKTSDITQARVKSC).

This sequence belongs to the IRF family. Interacts with BRD7, IRF2BP1 and IRF2BP2. Interacts with CREBBP in growing cells; the interaction acetylates IRF2 and regulates IRF2-dependent H4 promoter activity. In terms of processing, acetylated by CBP/ p300 during cell-growth. Acetylation on Lys-75 is required for stimulation of H4 promoter activity. Post-translationally, the major sites of sumoylation are Lys-137 and Lys-293. Sumoylation with SUMO1 increases its transcriptional repressor activity on IRF1 and diminishes its ability to activate ISRE and H4 promoter.

It localises to the nucleus. In terms of biological role, specifically binds to the upstream regulatory region of type I IFN and IFN-inducible MHC class I genes (the interferon consensus sequence (ICS)) and represses those genes. Also acts as an activator for several genes including H4 and IL7. Constitutively binds to the ISRE promoter to activate IL7. Involved in cell cycle regulation through binding the site II (HiNF-M) promoter region of H4 and activating transcription during cell growth. Antagonizes IRF1 transcriptional activation. The sequence is that of Interferon regulatory factor 2 (Irf2) from Mus musculus (Mouse).